The chain runs to 664 residues: Protein SIEVE ELEMENT OCCLUSION C (664 aa).

This is Protein SIEVE ELEMENT OCCLUSION C from Arabidopsis thaliana (Mouse-ear cress).